A 56-amino-acid polypeptide reads, in one-letter code: Protein hunchback (56 aa).

C2H2-type zinc fingers lie at residues 1–5, 11–33, and 39–56; these read HLRNH, FRCDKCDYQCVNKSMLNSHLKSH, and YRCADCTYATKYCHSLKL.

The protein belongs to the hunchback C2H2-type zinc-finger protein family.

The protein resides in the nucleus. Gap class segmentation protein that controls development of head structures. This Locusta migratoria (Migratory locust) protein is Protein hunchback (hb).